The primary structure comprises 237 residues: MDLLLGIIQGLTEFLPVSSSGHLTLLSHLLKTDLNAYQTAVLHLGTLVSVVLFAFDGIRRSLRSWRIILNLIVSTIPAGVFGVLFEKQIDQLFSSPRFLPLFFSVTALILMFTRYSSSGEKRMENMSFLDALLVGIAQLFALFPGISRSGITVSSLLFMKYRGEDALQYSFLMSIPVVLGAGILGLEKGNITILAPIFAFLSGLFALYVLSRSVRSGKIWQFSYYCLFVAILSYLVG.

The next 7 helical transmembrane spans lie at 38-58 (QTAV…FDGI), 65-85 (WRII…GVLF), 92-112 (LFSS…ILMF), 126-146 (MSFL…FPGI), 166-186 (ALQY…ILGL), 191-211 (ITIL…YVLS), and 217-237 (GKIW…YLVG).

This sequence belongs to the UppP family.

The protein localises to the cell inner membrane. The enzyme catalyses di-trans,octa-cis-undecaprenyl diphosphate + H2O = di-trans,octa-cis-undecaprenyl phosphate + phosphate + H(+). Functionally, catalyzes the dephosphorylation of undecaprenyl diphosphate (UPP). Confers resistance to bacitracin. This Thermotoga petrophila (strain ATCC BAA-488 / DSM 13995 / JCM 10881 / RKU-1) protein is Undecaprenyl-diphosphatase.